The following is a 601-amino-acid chain: Peptide transporter PTR2 (601 aa).

Over residues methionine 1–aspartate 10 the composition is skewed to polar residues. The segment at methionine 1–glutamate 66 is disordered. The Extracellular segment spans residues methionine 1–threonine 150. Residues aspartate 14–threonine 28 show a composition bias toward basic and acidic residues. A Phosphotyrosine modification is found at tyrosine 37. Phosphoserine is present on residues serine 39 and serine 45. Positions valine 42–proline 53 are enriched in polar residues. The segment covering proline 55–glutamate 66 has biased composition (acidic residues). Residues phenylalanine 151–leucine 172 form a helical membrane-spanning segment. At phenylalanine 173 to asparagine 182 the chain is on the cytoplasmic side. A helical transmembrane segment spans residues arginine 183–glycine 202. Over methionine 203 to valine 210 the chain is Extracellular. The helical transmembrane segment at leucine 211–glycine 229 threads the bilayer. Residues glutamate 230–histidine 267 are Cytoplasmic-facing. A helical transmembrane segment spans residues lysine 268–threonine 287. The Extracellular portion of the chain corresponds to leucine 288–glutamine 294. A helical membrane pass occupies residues tyrosine 295–threonine 316. The Cytoplasmic segment spans residues lysine 317–methionine 378. Residues methionine 379–isoleucine 399 traverse the membrane as a helical segment. Over phenylalanine 400–isoleucine 412 the chain is Extracellular. Residues arginine 413–methionine 429 form a helical membrane-spanning segment. The Cytoplasmic portion of the chain corresponds to phenylalanine 430 to alanine 448. Residues glycine 449–valine 466 form a helical membrane-spanning segment. Residues cysteine 467 to lysine 494 are Extracellular-facing. The helical transmembrane segment at alanine 495–phenylalanine 513 threads the bilayer. Residues glycine 514–valine 526 lie on the Cytoplasmic side of the membrane. The helical transmembrane segment at aspartate 527 to leucine 547 threads the bilayer. Residues phenylalanine 548–lysine 554 lie on the Extracellular side of the membrane. A helical transmembrane segment spans residues tyrosine 555–proline 577. The Cytoplasmic portion of the chain corresponds to isoleucine 578–tyrosine 601. Phosphoserine is present on serine 594.

The protein belongs to the major facilitator superfamily. Proton-dependent oligopeptide transporter (POT/PTR) (TC 2.A.17) family.

Its subcellular location is the membrane. In terms of biological role, uptake of small peptides. This is Peptide transporter PTR2 (PTR2) from Saccharomyces cerevisiae (strain ATCC 204508 / S288c) (Baker's yeast).